Here is a 156-residue protein sequence, read N- to C-terminus: Transcription elongation factor GreA (156 aa).

Residues 1–84 adopt a coiled-coil conformation; that stretch reads MAKYTISKHR…IEDVLRSTDE (84 aa).

It belongs to the GreA/GreB family.

Functionally, necessary for efficient RNA polymerase transcription elongation past template-encoded arresting sites. The arresting sites in DNA have the property of trapping a certain fraction of elongating RNA polymerases that pass through, resulting in locked ternary complexes. Cleavage of the nascent transcript by cleavage factors such as GreA or GreB allows the resumption of elongation from the new 3'terminus. GreA releases sequences of 2 to 3 nucleotides. In Ureaplasma parvum serovar 3 (strain ATCC 27815 / 27 / NCTC 11736), this protein is Transcription elongation factor GreA.